We begin with the raw amino-acid sequence, 273 residues long: MTVLHSIDFFSSSSAPVAIEARAPQSAFPEHHHDFYEIVIVEEGAGVHVFNGNPYTLSRGCVCFVRDHDRHLFESTDDLFLTNVLFRAPDAFRFLSGVGHFLPRECDGVYPSHWRVNGQVLQQIKCLIACLEHAPKSDQVEDIALHESVFMQLLVKLWQGCQTQVGDDQEGRLYQLLDWLQNNYSEAVEWPELADRFALPLRTLHRQLKNKTGMTPQRYLTRLHLLQARHQLCYSDNSVTDIAYLCGFGDSNHFSTLFKREFSQSPRDLRSQL.

Residues 174–272 form the HTH araC/xylS-type domain; the sequence is YQLLDWLQNN…SQSPRDLRSQ (99 aa). DNA-binding regions (H-T-H motif) lie at residues 191-212 and 239-262; these read PELA…KNKT and VTDI…KREF.

Binds DNA as a dimer.

It is found in the cytoplasm. Activates expression of the rhaBAD and rhaT operons. This is HTH-type transcriptional activator RhaS from Yersinia pestis bv. Antiqua (strain Antiqua).